A 358-amino-acid polypeptide reads, in one-letter code: Chorismate synthase (358 aa).

An NADP(+)-binding site is contributed by Arg46. FMN contacts are provided by residues 123 to 125, 235 to 236, Gly275, 290 to 294, and Arg316; these read RSS, NA, and KPTPS.

This sequence belongs to the chorismate synthase family. As to quaternary structure, homotetramer. FMNH2 is required as a cofactor.

It catalyses the reaction 5-O-(1-carboxyvinyl)-3-phosphoshikimate = chorismate + phosphate. The protein operates within metabolic intermediate biosynthesis; chorismate biosynthesis; chorismate from D-erythrose 4-phosphate and phosphoenolpyruvate: step 7/7. Its function is as follows. Catalyzes the anti-1,4-elimination of the C-3 phosphate and the C-6 proR hydrogen from 5-enolpyruvylshikimate-3-phosphate (EPSP) to yield chorismate, which is the branch point compound that serves as the starting substrate for the three terminal pathways of aromatic amino acid biosynthesis. This reaction introduces a second double bond into the aromatic ring system. The chain is Chorismate synthase from Helicobacter hepaticus (strain ATCC 51449 / 3B1).